The chain runs to 217 residues: MSSKVSRDTLYEAVREVLQGSKKKKRKFLETVELQISLKNYDPQKDKRFSGTVRLKSTPRPKFSLCVLGDQQHCDEAKAVDLPHMDIEALKKLNKNKKLVKKLAKKYDAFLASESLIKQIPRILGPGLNKAGKFPSLLTHNENLVAKVDEVKSTIKFQMKKVLCLAVAVGHVKLTEEELVYNIHLSINFLVSLLKKNWQNVRALYIKSTMGKPQRLY.

It belongs to the universal ribosomal protein uL1 family. Component of the large ribosomal subunit.

The protein localises to the cytoplasm. Component of the large ribosomal subunit. The ribosome is a large ribonucleoprotein complex responsible for the synthesis of proteins in the cell. This is Large ribosomal subunit protein uL1 (rpl10a) from Xenopus laevis (African clawed frog).